We begin with the raw amino-acid sequence, 380 residues long: Cytochrome b (380 aa).

4 helical membrane passes run 34–54 (FGSL…LLAM), 78–99 (WLIR…YLHI), 114–134 (WNTG…GYVL), and 179–199 (FFAL…IHLT). The heme b site is built by His84 and His98. Residues His183 and His197 each coordinate heme b. Residue His202 participates in a ubiquinone binding. A run of 4 helical transmembrane segments spans residues 227 to 247 (LKDA…ALFS), 289 to 309 (LGGV…PLLH), 321 to 341 (LSQL…WIGS), and 348 to 368 (FIII…ILFP).

It belongs to the cytochrome b family. In terms of assembly, the cytochrome bc1 complex contains 11 subunits: 3 respiratory subunits (MT-CYB, CYC1 and UQCRFS1), 2 core proteins (UQCRC1 and UQCRC2) and 6 low-molecular weight proteins (UQCRH/QCR6, UQCRB/QCR7, UQCRQ/QCR8, UQCR10/QCR9, UQCR11/QCR10 and a cleavage product of UQCRFS1). This cytochrome bc1 complex then forms a dimer. The cofactor is heme b.

It localises to the mitochondrion inner membrane. In terms of biological role, component of the ubiquinol-cytochrome c reductase complex (complex III or cytochrome b-c1 complex) that is part of the mitochondrial respiratory chain. The b-c1 complex mediates electron transfer from ubiquinol to cytochrome c. Contributes to the generation of a proton gradient across the mitochondrial membrane that is then used for ATP synthesis. The chain is Cytochrome b (MT-CYB) from Oceanodroma tethys (Wedge-rumped storm-petrel).